A 218-amino-acid chain; its full sequence is Ropporin-1-like protein (218 aa).

The RIIa domain occupies 17–46; it reads PELTDILKQFTKAAIRTQPADVLQWSAGYF.

Belongs to the ropporin family. Component of the axonemal radial spoke complex 1 (RS1), at least composed of spoke head proteins RSPH1, RSPH3, RSPH9 and the cilia-specific component RSPH4A or sperm-specific component RSPH6A, spoke stalk proteins RSPH14, DNAJB13, DYDC1, ROPN1L and NME5, and the anchor protein IQUB. May interact with AKAP3. Interacts with FSCB; the interaction increases upon spermatozoa capacitation conditions. Interacts with CFAP61. In terms of processing, sumoylated, sumoylation decreases upon spermatozoa capacitation conditions.

The protein localises to the cell projection. Its subcellular location is the cilium. It localises to the flagellum. Its function is as follows. Functions as part of axonemal radial spoke complexes that play an important part in the motility of sperm and cilia. Important for male fertility. With ROPN1, involved in fibrous sheath integrity and sperm motility, plays a role in PKA-dependent signaling processes required for spermatozoa capacitation. This chain is Ropporin-1-like protein (ROPN1L), found in Bos taurus (Bovine).